The chain runs to 192 residues: uncharacterized protein (192 aa).

This is an uncharacterized protein from Acanthamoeba polyphaga mimivirus (APMV).